A 219-amino-acid chain; its full sequence is Adenylate kinase (219 aa).

An ATP-binding site is contributed by 10-15 (GAGKGT). Positions 30 to 59 (STGDMLRAAVKAGTPLGQQAKKVMDAGELV) are NMP. AMP contacts are provided by residues threonine 31, arginine 36, 57–59 (ELV), 85–88 (GFPR), and glutamine 92. The tract at residues 122–159 (GRRVHPGSGRVYHVEHNPPKEEGKDDVTGEPLVQRDDD) is LID. Residues arginine 123 and 132–133 (VY) each bind ATP. Residues 129-152 (SGRVYHVEHNPPKEEGKDDVTGEP) are disordered. The span at 133-152 (YHVEHNPPKEEGKDDVTGEP) shows a compositional bias: basic and acidic residues. Residues arginine 156 and arginine 167 each contribute to the AMP site. Residue glycine 203 coordinates ATP.

This sequence belongs to the adenylate kinase family. As to quaternary structure, monomer.

Its subcellular location is the cytoplasm. The enzyme catalyses AMP + ATP = 2 ADP. The protein operates within purine metabolism; AMP biosynthesis via salvage pathway; AMP from ADP: step 1/1. Catalyzes the reversible transfer of the terminal phosphate group between ATP and AMP. Plays an important role in cellular energy homeostasis and in adenine nucleotide metabolism. The sequence is that of Adenylate kinase from Alkalilimnicola ehrlichii (strain ATCC BAA-1101 / DSM 17681 / MLHE-1).